Reading from the N-terminus, the 671-residue chain is DNA ligase (671 aa).

Residues 32-36 (DAEYD), 81-82 (SL), and Glu-113 each bind NAD(+). The active-site N6-AMP-lysine intermediate is the Lys-115. NAD(+)-binding residues include Arg-136, Glu-173, Lys-290, and Lys-314. Positions 408, 411, 426, and 432 each coordinate Zn(2+). In terms of domain architecture, BRCT spans 593-671 (EIDSPFAGKT…EAEMIRLLGA (79 aa)).

This sequence belongs to the NAD-dependent DNA ligase family. LigA subfamily. Mg(2+) serves as cofactor. Mn(2+) is required as a cofactor.

The catalysed reaction is NAD(+) + (deoxyribonucleotide)n-3'-hydroxyl + 5'-phospho-(deoxyribonucleotide)m = (deoxyribonucleotide)n+m + AMP + beta-nicotinamide D-nucleotide.. DNA ligase that catalyzes the formation of phosphodiester linkages between 5'-phosphoryl and 3'-hydroxyl groups in double-stranded DNA using NAD as a coenzyme and as the energy source for the reaction. It is essential for DNA replication and repair of damaged DNA. The polypeptide is DNA ligase (Salmonella heidelberg (strain SL476)).